The sequence spans 514 residues: ATP synthase subunit alpha (514 aa).

170 to 177 (GDRQTGKT) contacts ATP.

The protein belongs to the ATPase alpha/beta chains family. As to quaternary structure, F-type ATPases have 2 components, CF(1) - the catalytic core - and CF(0) - the membrane proton channel. CF(1) has five subunits: alpha(3), beta(3), gamma(1), delta(1), epsilon(1). CF(0) has three main subunits: a(1), b(2) and c(9-12). The alpha and beta chains form an alternating ring which encloses part of the gamma chain. CF(1) is attached to CF(0) by a central stalk formed by the gamma and epsilon chains, while a peripheral stalk is formed by the delta and b chains.

It localises to the cell inner membrane. It carries out the reaction ATP + H2O + 4 H(+)(in) = ADP + phosphate + 5 H(+)(out). In terms of biological role, produces ATP from ADP in the presence of a proton gradient across the membrane. The alpha chain is a regulatory subunit. The polypeptide is ATP synthase subunit alpha (Acidithiobacillus ferrooxidans (strain ATCC 23270 / DSM 14882 / CIP 104768 / NCIMB 8455) (Ferrobacillus ferrooxidans (strain ATCC 23270))).